A 274-amino-acid chain; its full sequence is tRNA pseudouridine synthase A (274 aa).

D56 functions as the Nucleophile in the catalytic mechanism. Position 109 (Y109) interacts with substrate.

This sequence belongs to the tRNA pseudouridine synthase TruA family.

It carries out the reaction uridine(38/39/40) in tRNA = pseudouridine(38/39/40) in tRNA. In terms of biological role, formation of pseudouridine at positions 38, 39 and 40 in the anticodon stem and loop of transfer RNAs. This is tRNA pseudouridine synthase A from Methanosphaera stadtmanae (strain ATCC 43021 / DSM 3091 / JCM 11832 / MCB-3).